The sequence spans 547 residues: Sodium-coupled neutral amino acid transporter 4 (547 aa).

The tract at residues 1-34 is disordered; it reads MDPMELNNVSIEPDGDSCSGDSIQDSYTGMENSD. Over 1 to 104 the chain is Extracellular; sequence MDPMELNNVS…GLSYAMANTG (104 aa). Polar residues predominate over residues 19-31; the sequence is SGDSIQDSYTGME. Ser-49 carries the post-translational modification Phosphoserine. The chain crosses the membrane as a helical span at residues 105–125; that stretch reads IILFIIMLLTVAILSLYSVHL. The Cytoplasmic segment spans residues 126 to 151; it reads LLKTAKEGGSLIYEKLGEKAFGWPGK. A helical membrane pass occupies residues 152–172; it reads IGAFISITMQNIGAMSSYLFI. Topologically, residues 173-195 are extracellular; sequence IKYELPEVIRAFMGLEENTGEWY. Residues 196 to 216 form a helical membrane-spanning segment; that stretch reads LNGNYLVLFVSVGIILPLSLL. Topologically, residues 217–220 are cytoplasmic; sequence KNLG. Residues 221–241 form a helical membrane-spanning segment; it reads YLGYTSGFSLSCMVFFVSVVI. Over 242 to 332 the chain is Extracellular; it reads YKKFQIPCPL…PKYFVFNSRT (91 aa). An intrachain disulfide couples Cys-249 to Cys-321. 3 N-linked (GlcNAc...) asparagine glycosylation sites follow: Asn-260, Asn-264, and Asn-276. Residues 333–353 traverse the membrane as a helical segment; sequence AYAIPILAFAFVCHPEVLPIY. Residues 354–369 are Cytoplasmic-facing; sequence SELKDRSRRKMQTVSN. The helical transmembrane segment at 370-390 threads the bilayer; the sequence is ISISGMLVMYLLAALFGYLSF. Topologically, residues 391–411 are extracellular; the sequence is YGDVEDELLHAYSKVYTFDTA. Residues 412–432 traverse the membrane as a helical segment; it reads LLMVRLAVLVAVTLTVPIVLF. Over 433–453 the chain is Cytoplasmic; that stretch reads PIRTSVITLLFPRKPFSWLKH. A helical transmembrane segment spans residues 454 to 474; sequence FGIAAIIIALNNILVILVPTI. Over 475 to 476 the chain is Extracellular; it reads KY. Residues 477 to 497 form a helical membrane-spanning segment; it reads IFGFIGASSATMLIFILPAAF. At 498-514 the chain is on the cytoplasmic side; sequence YLKLVKKEPLRSPQKIG. Residues 515 to 535 form a helical membrane-spanning segment; it reads ALVFLVTGIIFMMGSMALIIL. At 536 to 547 the chain is on the extracellular side; sequence DWIYNPPNPNHH.

The protein belongs to the amino acid/polyamine transporter 2 family. In terms of processing, the disulfide bond plays an important role in substrate transport, but has no effect on trafficking to the cell surface. As to expression, detected in liver, in hepatocytes surrounding the central vein. Not detected in heart, kidney, brain, lung, small intestine, spleen and thymus. Highly expressed in placenta.

Its subcellular location is the cell membrane. It localises to the cell projection. The protein resides in the microvillus membrane. It catalyses the reaction L-alanine(in) + Na(+)(in) = L-alanine(out) + Na(+)(out). The catalysed reaction is L-methionine(in) + Na(+)(in) = L-methionine(out) + Na(+)(out). It carries out the reaction L-asparagine(in) + Na(+)(in) = L-asparagine(out) + Na(+)(out). The enzyme catalyses L-threonine(in) + Na(+)(in) = L-threonine(out) + Na(+)(out). It catalyses the reaction L-serine(in) + Na(+)(in) = L-serine(out) + Na(+)(out). The catalysed reaction is glycine(in) + Na(+)(in) = glycine(out) + Na(+)(out). It carries out the reaction L-glutamine(in) + Na(+)(in) = L-glutamine(out) + Na(+)(out). The enzyme catalyses L-histidine(in) + Na(+)(in) = L-histidine(out) + Na(+)(out). It catalyses the reaction L-cysteine(in) + Na(+)(in) = L-cysteine(out) + Na(+)(out). The catalysed reaction is L-proline(in) + Na(+)(in) = L-proline(out) + Na(+)(out). Functionally, symporter that cotransports neutral amino acids and sodium ions from the extraccellular to the intracellular side of the cell membrane. The transport is electrogenic, pH dependent and partially tolerates substitution of Na(+) by Li(+). Preferentially transports smaller amino acids, such as glycine, L-alanine, L-serine, L-asparagine and L-threonine, followed by L-cysteine, L-histidine, L-proline and L-glutamine and L-methionine. In Mus musculus (Mouse), this protein is Sodium-coupled neutral amino acid transporter 4.